Here is a 447-residue protein sequence, read N- to C-terminus: Asparagine--tRNA ligase (447 aa).

This sequence belongs to the class-II aminoacyl-tRNA synthetase family. As to quaternary structure, homodimer.

The protein resides in the cytoplasm. The catalysed reaction is tRNA(Asn) + L-asparagine + ATP = L-asparaginyl-tRNA(Asn) + AMP + diphosphate + H(+). In Mycoplasma mobile (strain ATCC 43663 / 163K / NCTC 11711) (Mesomycoplasma mobile), this protein is Asparagine--tRNA ligase.